The chain runs to 371 residues: Serine/threonine-protein kinase 17B (371 aa).

Positions 33 to 293 constitute a Protein kinase domain; sequence TLTPKELGRG…AESCLSHSWL (261 aa). ATP contacts are provided by residues 39–47 and lysine 62; that span reads LGRGKFAVV. Aspartate 158 acts as the Proton acceptor in catalysis. Positions 308 to 345 are disordered; it reads SESSQTQDLSLRSSEDKTPKSCNGSCGDREDKENIPED. Positions 309–319 are enriched in polar residues; sequence ESSQTQDLSLR.

This sequence belongs to the protein kinase superfamily. CAMK Ser/Thr protein kinase family. DAP kinase subfamily. As to quaternary structure, interacts with CHP1; the interaction induces CHP1 to translocate from the Golgi to the nucleus. Post-translationally, autophosphorylated. As to expression, highly expressed in thymus, spleen, and testis, lower levels present in the brain.

It localises to the nucleus. The protein resides in the cell membrane. The protein localises to the endoplasmic reticulum-Golgi intermediate compartment. It carries out the reaction L-seryl-[protein] + ATP = O-phospho-L-seryl-[protein] + ADP + H(+). The catalysed reaction is L-threonyl-[protein] + ATP = O-phospho-L-threonyl-[protein] + ADP + H(+). In terms of biological role, acts as a positive regulator of apoptosis. Phosphorylates myosin light chains. In Rattus norvegicus (Rat), this protein is Serine/threonine-protein kinase 17B (Stk17b).